Here is a 472-residue protein sequence, read N- to C-terminus: ATP synthase subunit beta (472 aa).

155 to 162 (GGAGVGKT) is an ATP binding site.

It belongs to the ATPase alpha/beta chains family. As to quaternary structure, F-type ATPases have 2 components, CF(1) - the catalytic core - and CF(0) - the membrane proton channel. CF(1) has five subunits: alpha(3), beta(3), gamma(1), delta(1), epsilon(1). CF(0) has three main subunits: a(1), b(2) and c(9-12). The alpha and beta chains form an alternating ring which encloses part of the gamma chain. CF(1) is attached to CF(0) by a central stalk formed by the gamma and epsilon chains, while a peripheral stalk is formed by the delta and b chains.

The protein resides in the cell inner membrane. It catalyses the reaction ATP + H2O + 4 H(+)(in) = ADP + phosphate + 5 H(+)(out). Its function is as follows. Produces ATP from ADP in the presence of a proton gradient across the membrane. The catalytic sites are hosted primarily by the beta subunits. This chain is ATP synthase subunit beta, found in Fervidobacterium nodosum (strain ATCC 35602 / DSM 5306 / Rt17-B1).